Consider the following 442-residue polypeptide: GTPase Der (442 aa).

EngA-type G domains lie at 2–167 and 175–351; these read RTIA…PIQN and FKFC…EQAM. GTP is bound by residues 8–15, 55–59, 119–122, 181–188, 228–232, and 293–296; these read GKPNVGKS, DTGGI, NKVE, GRPNVGKS, DTAGV, and NKWD. One can recognise a KH-like domain in the interval 352–436; it reads RKVATSLLND…PITLYWQDKN (85 aa).

This sequence belongs to the TRAFAC class TrmE-Era-EngA-EngB-Septin-like GTPase superfamily. EngA (Der) GTPase family. Associates with the 50S ribosomal subunit.

GTPase that plays an essential role in the late steps of ribosome biogenesis. This chain is GTPase Der, found in Ureaplasma urealyticum serovar 10 (strain ATCC 33699 / Western).